A 499-amino-acid polypeptide reads, in one-letter code: Glycerol kinase (499 aa).

T12 provides a ligand contact to ADP. ATP contacts are provided by T12, T13, and S14. Position 12 (T12) interacts with sn-glycerol 3-phosphate. ADP is bound at residue R16. Residues R82, E83, Y135, and D245 each contribute to the sn-glycerol 3-phosphate site. The glycerol site is built by R82, E83, Y135, D245, and Q246. Positions 267 and 310 each coordinate ADP. ATP contacts are provided by T267, G310, Q314, and G411. Residues G411 and N415 each contribute to the ADP site.

This sequence belongs to the FGGY kinase family. As to quaternary structure, homotetramer and homodimer (in equilibrium).

The catalysed reaction is glycerol + ATP = sn-glycerol 3-phosphate + ADP + H(+). It participates in polyol metabolism; glycerol degradation via glycerol kinase pathway; sn-glycerol 3-phosphate from glycerol: step 1/1. Activated by phosphorylation and inhibited by fructose 1,6-bisphosphate (FBP). Key enzyme in the regulation of glycerol uptake and metabolism. Catalyzes the phosphorylation of glycerol to yield sn-glycerol 3-phosphate. This is Glycerol kinase from Clostridium beijerinckii (strain ATCC 51743 / NCIMB 8052) (Clostridium acetobutylicum).